A 183-amino-acid polypeptide reads, in one-letter code: dTDP-4-dehydrorhamnose 3,5-epimerase (183 aa).

Substrate-binding positions include arginine 24, glutamate 29, 48–50 (QDN), and arginine 60. Histidine 63 acts as the Proton acceptor in catalysis. 2 residues coordinate substrate: lysine 73 and histidine 120. Tyrosine 133 acts as the Proton donor in catalysis. Positions 144 and 169 each coordinate substrate.

Belongs to the dTDP-4-dehydrorhamnose 3,5-epimerase family. Homodimer.

It catalyses the reaction dTDP-4-dehydro-6-deoxy-alpha-D-glucose = dTDP-4-dehydro-beta-L-rhamnose. It functions in the pathway carbohydrate biosynthesis; dTDP-L-rhamnose biosynthesis. Its pathway is bacterial outer membrane biogenesis; LPS O-antigen biosynthesis. Its function is as follows. Catalyzes the epimerization of the C3' and C5'positions of dTDP-6-deoxy-D-xylo-4-hexulose, forming dTDP-6-deoxy-L-lyxo-4-hexulose. The protein is dTDP-4-dehydrorhamnose 3,5-epimerase of Salmonella typhimurium (strain LT2 / SGSC1412 / ATCC 700720).